The primary structure comprises 888 residues: Alanine--tRNA ligase (888 aa).

Positions 573, 577, 676, and 680 each coordinate Zn(2+).

Belongs to the class-II aminoacyl-tRNA synthetase family. The cofactor is Zn(2+).

It is found in the cytoplasm. It catalyses the reaction tRNA(Ala) + L-alanine + ATP = L-alanyl-tRNA(Ala) + AMP + diphosphate. Catalyzes the attachment of alanine to tRNA(Ala) in a two-step reaction: alanine is first activated by ATP to form Ala-AMP and then transferred to the acceptor end of tRNA(Ala). Also edits incorrectly charged Ser-tRNA(Ala) and Gly-tRNA(Ala) via its editing domain. The protein is Alanine--tRNA ligase of Corynebacterium glutamicum (strain ATCC 13032 / DSM 20300 / JCM 1318 / BCRC 11384 / CCUG 27702 / LMG 3730 / NBRC 12168 / NCIMB 10025 / NRRL B-2784 / 534).